The chain runs to 452 residues: COBRA-like protein 1 (452 aa).

A signal peptide spans 1–33; sequence MGFFLCSSSSIFFKFGISIIFLVSFSGLTPSEA. N-linked (GlcNAc...) asparagine glycosylation is found at Asn42, Asn167, Asn175, Asn214, Asn239, Asn254, Asn323, Asn338, and Asn357. Residue Ser432 is the site of GPI-anchor amidated serine attachment. Positions 433–452 are cleaved as a propeptide — removed in mature form; it reads VGSLFAAMALLLIVFLHGNL.

The protein belongs to the COBRA family. As to expression, expressed in roots, stems, leaves, flowers and siliques.

Its subcellular location is the cell membrane. In Arabidopsis thaliana (Mouse-ear cress), this protein is COBRA-like protein 1 (COBL1).